The following is a 472-amino-acid chain: MLEFMDYVQLAFAEATRWNQDNSYSSLTAIAESLLDFHVPERLQVHLSSLSTPHFATSYTLGTVGLIDGSVSYLFSTVPLNNTPSQSGVIPLRRLVRGYRQIEAPVPPIRNWGWDAIPSHDSSQIIDSADINQDDIVRKATLLHATLHLPPPSTLNALFQRRISPTTQITAALVSTQGPPLIKSAPSAALLAQISHDTGTFSNEYLFSTDNALFGWRGLWNIGLDPSPGKQSTDKVSLLSAGAEAYYSPISSLVGLSTGLKFTTLPAAGRALSSSSSSSPGSNPSPISSFPYTLTLTLTPLTGSLSTTYSARASPNLAFSSRFGFNVYSWESEMVAGCEIWRKSPRTQPAEADDGLDWARRKMGIVKERAAEKISALSSSSSTPQAVEESEGDSVVKIRVDQSWNVRLLWEGRVKSLLVTAGVSLGPGTFTALSSGPASPTSSSAPVAMAGAPPTSRPSYWQGVGVSILYSS.

Over residues 433–450 (LSSGPASPTSSSAPVAMA) the composition is skewed to low complexity. A disordered region spans residues 433–454 (LSSGPASPTSSSAPVAMAGAPP).

This sequence belongs to the MDM10 family. In terms of assembly, component of the ER-mitochondria encounter structure (ERMES) or MDM complex, composed of mmm1, mdm10, mdm12 and mdm34. Associates with the mitochondrial outer membrane sorting assembly machinery SAM(core) complex.

The protein resides in the mitochondrion outer membrane. Component of the ERMES/MDM complex, which serves as a molecular tether to connect the endoplasmic reticulum and mitochondria. Components of this complex are involved in the control of mitochondrial shape and protein biogenesis and may function in phospholipid exchange. mdm10 is involved in the late assembly steps of the general translocase of the mitochondrial outer membrane (TOM complex). Functions in the tom40-specific route of the assembly of outer membrane beta-barrel proteins, including the association of tom40 with the receptor tom22 and small TOM proteins. Can associate with the SAM(core) complex as well as the mdm12-mmm1 complex, both involved in late steps of the major beta-barrel assembly pathway, that is responsible for biogenesis of all outer membrane beta-barrel proteins. May act as a switch that shuttles between both complexes and channels precursor proteins into the tom40-specific pathway. Plays a role in mitochondrial morphology and in the inheritance of mitochondria. The sequence is that of Mitochondrial distribution and morphology protein 10 (mdm10) from Talaromyces stipitatus (strain ATCC 10500 / CBS 375.48 / QM 6759 / NRRL 1006) (Penicillium stipitatum).